Consider the following 456-residue polypeptide: Serine--tRNA ligase (456 aa).

The interval 49-69 (HERNEVSSTIGELKQAGEEEA) is disordered. 241–243 (TAE) contributes to the L-serine binding site. ATP contacts are provided by residues 272-274 (RQE) and V288. An L-serine-binding site is contributed by E295. 368–371 (EVSS) serves as a coordination point for ATP. S404 provides a ligand contact to L-serine.

It belongs to the class-II aminoacyl-tRNA synthetase family. Type-1 seryl-tRNA synthetase subfamily. As to quaternary structure, homodimer. The tRNA molecule binds across the dimer.

Its subcellular location is the cytoplasm. It catalyses the reaction tRNA(Ser) + L-serine + ATP = L-seryl-tRNA(Ser) + AMP + diphosphate + H(+). It carries out the reaction tRNA(Sec) + L-serine + ATP = L-seryl-tRNA(Sec) + AMP + diphosphate + H(+). Its pathway is aminoacyl-tRNA biosynthesis; selenocysteinyl-tRNA(Sec) biosynthesis; L-seryl-tRNA(Sec) from L-serine and tRNA(Sec): step 1/1. Functionally, catalyzes the attachment of serine to tRNA(Ser). Is also able to aminoacylate tRNA(Sec) with serine, to form the misacylated tRNA L-seryl-tRNA(Sec), which will be further converted into selenocysteinyl-tRNA(Sec). This Halorubrum lacusprofundi (strain ATCC 49239 / DSM 5036 / JCM 8891 / ACAM 34) protein is Serine--tRNA ligase.